We begin with the raw amino-acid sequence, 458 residues long: tRNA-2-methylthio-N(6)-dimethylallyladenosine synthase (458 aa).

The MTTase N-terminal domain occupies 2–118 (PKLYIKTYGC…VFEHVDGILR (117 aa)). [4Fe-4S] cluster-binding residues include Cys11, Cys47, Cys81, Cys170, Cys174, and Cys177. Positions 156 to 389 (PGVRSTAYVS…LAVVNEIAIR (234 aa)) constitute a Radical SAM core domain. The 64-residue stretch at 392–455 (RDLVGTVQEV…GFTLYGVPCP (64 aa)) folds into the TRAM domain.

Belongs to the methylthiotransferase family. MiaB subfamily. In terms of assembly, monomer. [4Fe-4S] cluster serves as cofactor.

Its subcellular location is the cytoplasm. The catalysed reaction is N(6)-dimethylallyladenosine(37) in tRNA + (sulfur carrier)-SH + AH2 + 2 S-adenosyl-L-methionine = 2-methylsulfanyl-N(6)-dimethylallyladenosine(37) in tRNA + (sulfur carrier)-H + 5'-deoxyadenosine + L-methionine + A + S-adenosyl-L-homocysteine + 2 H(+). Catalyzes the methylthiolation of N6-(dimethylallyl)adenosine (i(6)A), leading to the formation of 2-methylthio-N6-(dimethylallyl)adenosine (ms(2)i(6)A) at position 37 in tRNAs that read codons beginning with uridine. This is tRNA-2-methylthio-N(6)-dimethylallyladenosine synthase from Akkermansia muciniphila (strain ATCC BAA-835 / DSM 22959 / JCM 33894 / BCRC 81048 / CCUG 64013 / CIP 107961 / Muc).